The primary structure comprises 139 residues: Trafficking protein particle complex subunit 2-like protein (139 aa).

The protein belongs to the TRAPP small subunits family. Sedlin subfamily.

The protein localises to the cytoplasm. It is found in the perinuclear region. Its subcellular location is the endoplasmic reticulum. It localises to the golgi apparatus. May play a role in vesicular transport from endoplasmic reticulum to Golgi. This Taeniopygia guttata (Zebra finch) protein is Trafficking protein particle complex subunit 2-like protein (TRAPPC2L).